Here is a 328-residue protein sequence, read N- to C-terminus: MSSTPLKVAVTGAAGQIGYSLLFRLASGSLLGDRPIELRLLEITPALKALEGVVMELDDCAFPNLAGVQIGDDAEQIFDGVNLALLVGARPRGPGMERGDLLSANGAIFTAQGKALNKVAADDVRIGVTGNPANTNALIAMTNAPDIPQARFSALTRLDHNRAISQLAAKTGAAVTDIKKMTIWGNHSATQYPDVFHAEIGGRNAAEVVGDQDWIESTFIPTVAKRGAAIIEARGSSSAASAASATIDAARDWLFGSADADWVSMAVVSDGSYGVPEGLISSFPVTTKDGDWEIVQGLEIDDFSRAKIDASTAELADEREAVKELGLI.

12–18 (GAAGQIG) contacts NAD(+). Substrate-binding residues include Arg92 and Arg98. NAD(+) contacts are provided by residues Asn105, Gln112, and 129 to 131 (TGN). Asn131 and Arg162 together coordinate substrate. Catalysis depends on His187, which acts as the Proton acceptor.

Belongs to the LDH/MDH superfamily. MDH type 2 family.

It carries out the reaction (S)-malate + NAD(+) = oxaloacetate + NADH + H(+). Its function is as follows. Catalyzes the reversible oxidation of malate to oxaloacetate. The polypeptide is Malate dehydrogenase (Nocardioides sp. (strain ATCC BAA-499 / JS614)).